The primary structure comprises 752 residues: Photosystem I P700 chlorophyll a apoprotein A1 (752 aa).

A run of 8 helical transmembrane segments spans residues 73–96 (IFSAHFGQLSVIFLWISGMHFHGA), 159–182 (LYWIAIGGLAMSAIMLFAGWFHYH), 198–222 (MNHHLAGLLGLGCLSWSGHQIHVAL), 294–312 (IAHHHLALAVLFIFAGHMY), 349–372 (WHAQLAINLAMMGSLSIIVAHHMY), 388–414 (LSLFTHHMWIGGFCVTGGAAHAAIFMV), 436–458 (SIIAHLNWVCIFLGCHAFGFYIH), and 533–551 (FMVHHIHAFTIHVTVLILL). Positions 575 and 584 each coordinate [4Fe-4S] cluster. 2 consecutive transmembrane segments (helical) span residues 591-612 (HVFLGLFWMYNSISVVIFHFSW) and 666-688 (ASAYGLIFLGAHFIWAFSLMFLF). H677 serves as a coordination point for chlorophyll a'. Residues M685 and Y693 each coordinate chlorophyll a. Phylloquinone is bound at residue W694. A helical transmembrane segment spans residues 726–746 (AVGLAHYLLGGIGTTWAFFLA).

This sequence belongs to the PsaA/PsaB family. The PsaA/B heterodimer binds the P700 chlorophyll special pair and subsequent electron acceptors. PSI consists of a core antenna complex that captures photons, and an electron transfer chain that converts photonic excitation into a charge separation. The eukaryotic PSI reaction center is composed of at least 11 subunits. P700 is a chlorophyll a/chlorophyll a' dimer, A0 is one or more chlorophyll a, A1 is one or both phylloquinones and FX is a shared 4Fe-4S iron-sulfur center. serves as cofactor.

Its subcellular location is the plastid. It is found in the chloroplast thylakoid membrane. The catalysed reaction is reduced [plastocyanin] + hnu + oxidized [2Fe-2S]-[ferredoxin] = oxidized [plastocyanin] + reduced [2Fe-2S]-[ferredoxin]. In terms of biological role, psaA and PsaB bind P700, the primary electron donor of photosystem I (PSI), as well as the electron acceptors A0, A1 and FX. PSI is a plastocyanin/cytochrome c6-ferredoxin oxidoreductase, converting photonic excitation into a charge separation, which transfers an electron from the donor P700 chlorophyll pair to the spectroscopically characterized acceptors A0, A1, FX, FA and FB in turn. Oxidized P700 is reduced on the lumenal side of the thylakoid membrane by plastocyanin or cytochrome c6. The polypeptide is Photosystem I P700 chlorophyll a apoprotein A1 (Phaeodactylum tricornutum (strain CCAP 1055/1)).